A 200-amino-acid chain; its full sequence is Cytochrome c biogenesis ATP-binding export protein CcmA (200 aa).

An ABC transporter domain is found at M1–A199. G35–T42 contributes to the ATP binding site.

This sequence belongs to the ABC transporter superfamily. CcmA exporter (TC 3.A.1.107) family. In terms of assembly, the complex is composed of two ATP-binding proteins (CcmA) and two transmembrane proteins (CcmB).

The protein localises to the cell inner membrane. The catalysed reaction is heme b(in) + ATP + H2O = heme b(out) + ADP + phosphate + H(+). In terms of biological role, part of the ABC transporter complex CcmAB involved in the biogenesis of c-type cytochromes; once thought to export heme, this seems not to be the case, but its exact role is uncertain. Responsible for energy coupling to the transport system. The chain is Cytochrome c biogenesis ATP-binding export protein CcmA from Rhodopseudomonas palustris (strain BisB18).